Consider the following 302-residue polypeptide: Elongation factor Ts (302 aa).

An involved in Mg(2+) ion dislocation from EF-Tu region spans residues 80 to 83; it reads TDFV.

It belongs to the EF-Ts family.

The protein resides in the cytoplasm. Its function is as follows. Associates with the EF-Tu.GDP complex and induces the exchange of GDP to GTP. It remains bound to the aminoacyl-tRNA.EF-Tu.GTP complex up to the GTP hydrolysis stage on the ribosome. The protein is Elongation factor Ts of Gluconobacter oxydans (strain 621H) (Gluconobacter suboxydans).